Consider the following 243-residue polypeptide: Aspartate/glutamate leucyltransferase (243 aa).

Belongs to the R-transferase family. Bpt subfamily.

Its subcellular location is the cytoplasm. The enzyme catalyses N-terminal L-glutamyl-[protein] + L-leucyl-tRNA(Leu) = N-terminal L-leucyl-L-glutamyl-[protein] + tRNA(Leu) + H(+). The catalysed reaction is N-terminal L-aspartyl-[protein] + L-leucyl-tRNA(Leu) = N-terminal L-leucyl-L-aspartyl-[protein] + tRNA(Leu) + H(+). Functionally, functions in the N-end rule pathway of protein degradation where it conjugates Leu from its aminoacyl-tRNA to the N-termini of proteins containing an N-terminal aspartate or glutamate. The chain is Aspartate/glutamate leucyltransferase from Teredinibacter turnerae (strain ATCC 39867 / T7901).